Here is a 160-residue protein sequence, read N- to C-terminus: Cytochrome b6-f complex subunit 4 (160 aa).

The next 3 helical transmembrane spans lie at 36 to 56 (LLYIFPVVILGTIACVVGLAV), 95 to 115 (LLGIALQTLIPLGLMILPFIE), and 131 to 151 (SVFLFGTFLTIYLGIGACLPI).

Belongs to the cytochrome b family. PetD subfamily. In terms of assembly, the 4 large subunits of the cytochrome b6-f complex are cytochrome b6, subunit IV (17 kDa polypeptide, PetD), cytochrome f and the Rieske protein, while the 4 small subunits are PetG, PetL, PetM and PetN. The complex functions as a dimer.

It localises to the cellular thylakoid membrane. Component of the cytochrome b6-f complex, which mediates electron transfer between photosystem II (PSII) and photosystem I (PSI), cyclic electron flow around PSI, and state transitions. The polypeptide is Cytochrome b6-f complex subunit 4 (Prochlorococcus marinus subsp. pastoris (strain CCMP1986 / NIES-2087 / MED4)).